Here is an 837-residue protein sequence, read N- to C-terminus: MASKRKSTTPCMVRTSQVVEQDVPEEVDRAKEKGIGTPQPDVAKDCWAAELENSSKENEVIEVKSMGESQSKKLQGGYECKYCPYSTQNLNEFTEHVDMQHPNVILNPLYVCAECNFTTKKYDSLSDHNSKFHPGEANFKLKLIKRNNQTVLEQSIEATNHVVSITTSGPGTGDSDSGISVSKTPIMKPGKPKADAKKVPKKPEEIAPENHVEGTARLVTDTAEILSRLGGVELLQDTLGHVMPSVQLPPNINLVPKVPVPLNTTKYNSALDTNATMINSFNKFPYPTQAELSWLTAASKHPEEHIRIWFATQRLKHGISWSPEEVEEARKKMFNGTIQSVPPTITVLPAQLAPTKVTQPILQTALPCQILGQTSLVLTPVTSGSTTVSCSPITLAVAGVTNHGQKRPLVTPQAAPEPKRPHIAQVPEPPPKVANPPLTPASDRKKTKEQIAHLKASFLQSQFPDDAEVYRLIEVTGLARSEIKKWFSDHRYRCQRGIVHITSGSLAKEQLAIAASRHGRTYHAYPDFAPQKFKEKTQGQVKILEDSFLKSSFPTQAELDRLRVETKLSRREIDSWFSERRKLRDSMEQAVLDSMGSGKKGQDVGAPNGALSRLDQLSGAQLTSSLPSPSPAIAKSQEQVHLLRSTFARTQWPTPQEYDQLAAKTGLVRTEIVRWFKENRCLLKTGTVKWMEQYQHQPVADDHGYDAVARKATKPMAESPKNGGDMVPQYYKDPKKLCEEDLEKLVPRVKVGSEPAKDCLPAKPSEATSDRSEGSSRDGQGSDENEESSVVDYVEVTVGEEDAISDRSDSWSQAAAEGVAELAESDSDCVPAEAGQA.

The disordered stretch occupies residues 1 to 41 (MASKRKSTTPCMVRTSQVVEQDVPEEVDRAKEKGIGTPQPD). Residues 27 to 77 (VDRAKEKGIGTPQPDVAKDCWAAELENSSKENEVIEVKSMGESQSKKLQGG) form an interaction with EFNB1 region. T37 bears the Phosphothreonine mark. Residue K64 forms a Glycyl lysine isopeptide (Lys-Gly) (interchain with G-Cter in SUMO2) linkage. C2H2-type zinc fingers lie at residues 78-101 (YECK…DMQH) and 110-133 (YVCA…SKFH). Residues 167–180 (TSGPGTGDSDSGIS) are compositionally biased toward low complexity. Residues 167 to 203 (TSGPGTGDSDSGISVSKTPIMKPGKPKADAKKVPKKP) are disordered. Positions 192 to 203 (PKADAKKVPKKP) are enriched in basic and acidic residues. The segment at 195-358 (DAKKVPKKPE…PAQLAPTKVT (164 aa)) is required for homodimerization. 4 consecutive DNA-binding regions (homeobox) follow at residues 263 to 324 (NTTK…WSPE), 439 to 501 (TPAS…IVHI), 530 to 591 (PQKF…EQAV), and 628 to 690 (SPSP…TVKW). Positions 263 to 446 (NTTKYNSALD…PLTPASDRKK (184 aa)) are required for repressor activity. The required for interaction with NFYA stretch occupies residues 263 to 497 (NTTKYNSALD…SDHRYRCQRG (235 aa)). The tract at residues 317-446 (HGISWSPEEV…PLTPASDRKK (130 aa)) is required for nuclear localization. A disordered region spans residues 404 to 445 (GQKRPLVTPQAAPEPKRPHIAQVPEPPPKVANPPLTPASDRK). Over residues 427-439 (PEPPPKVANPPLT) the composition is skewed to pro residues. K455 participates in a covalent cross-link: Glycyl lysine isopeptide (Lys-Gly) (interchain with G-Cter in SUMO2). Residues 754–837 (EPAKDCLPAK…DCVPAEAGQA (84 aa)) are disordered. Phosphoserine occurs at positions 825 and 827.

This sequence belongs to the ZHX family. In terms of assembly, homodimer (via homeobox domain 1). Heterodimer with ZHX1 (via homeobox domain 1). Heterodimer with ZHX3 (via homeobox domain 1). Heterodimerization with ZHX1 is not necessary for repressor activity. Interacts (via homeobox domain) with NFYA (via N-terminus). Interacts with EFNB1 intracellular domain peptide; the interaction enhances ZHX2 transcriptional repression activity.

It is found in the nucleus. In terms of biological role, acts as a transcriptional repressor. Represses the promoter activity of the CDC25C gene stimulated by NFYA. May play a role in retinal development where it regulates the composition of bipolar cell populations, by promoting differentiation of bipolar OFF-type cells. In the brain, may promote maintenance and suppress differentiation of neural progenitor cells in the developing cortex. In Pongo abelii (Sumatran orangutan), this protein is Zinc fingers and homeoboxes protein 2 (ZHX2).